The sequence spans 174 residues: Protein-lysine myristoyltransferase HlyC (174 aa).

Residues histidine 23 and aspartate 92 contribute to the active site. Residue histidine 151 coordinates heme.

This sequence belongs to the RTX toxin acyltransferase family. In terms of assembly, monomer. Proteolytically cleaved by the protease systems ClpAP, ClpXP and FtsH, leading to its degradation.

It is found in the cytoplasm. It catalyses the reaction tetradecanoyl-[ACP] + L-lysyl-[protein] = N(6)-tetradecanoyl-L-lysyl-[protein] + holo-[ACP] + H(+). With respect to regulation, the acyltransferase activity is inhibited by heme. Protein-lysine myristoyltransferase that catalyzes myristoylation of the protoxin (HlyA) at two internal lysine residues, thereby converting it to the active toxin. This Escherichia coli protein is Protein-lysine myristoyltransferase HlyC.